The chain runs to 225 residues: NAD(P)H-quinone oxidoreductase subunit K, chloroplastic (225 aa).

4 residues coordinate [4Fe-4S] cluster: cysteine 43, cysteine 44, cysteine 108, and cysteine 139.

It belongs to the complex I 20 kDa subunit family. In terms of assembly, NDH is composed of at least 16 different subunits, 5 of which are encoded in the nucleus. Requires [4Fe-4S] cluster as cofactor.

The protein localises to the plastid. It localises to the chloroplast thylakoid membrane. The enzyme catalyses a plastoquinone + NADH + (n+1) H(+)(in) = a plastoquinol + NAD(+) + n H(+)(out). It carries out the reaction a plastoquinone + NADPH + (n+1) H(+)(in) = a plastoquinol + NADP(+) + n H(+)(out). NDH shuttles electrons from NAD(P)H:plastoquinone, via FMN and iron-sulfur (Fe-S) centers, to quinones in the photosynthetic chain and possibly in a chloroplast respiratory chain. The immediate electron acceptor for the enzyme in this species is believed to be plastoquinone. Couples the redox reaction to proton translocation, and thus conserves the redox energy in a proton gradient. The protein is NAD(P)H-quinone oxidoreductase subunit K, chloroplastic of Nuphar advena (Common spatterdock).